Here is a 194-residue protein sequence, read N- to C-terminus: Elongation factor P (194 aa).

This sequence belongs to the elongation factor P family.

It is found in the cytoplasm. It participates in protein biosynthesis; polypeptide chain elongation. Functionally, involved in peptide bond synthesis. Stimulates efficient translation and peptide-bond synthesis on native or reconstituted 70S ribosomes in vitro. Probably functions indirectly by altering the affinity of the ribosome for aminoacyl-tRNA, thus increasing their reactivity as acceptors for peptidyl transferase. This chain is Elongation factor P, found in Hydrogenobaculum sp. (strain Y04AAS1).